A 190-amino-acid chain; its full sequence is Transcription antitermination protein NusB (190 aa).

A disordered region spans residues 158-190 (AGTSEDHVPQREPAAGQLGQDDSNGGQVAAVCR).

Belongs to the NusB family.

Functionally, involved in transcription antitermination. Required for transcription of ribosomal RNA (rRNA) genes. Binds specifically to the boxA antiterminator sequence of the ribosomal RNA (rrn) operons. The protein is Transcription antitermination protein NusB of Mycobacterium leprae (strain TN).